Reading from the N-terminus, the 63-residue chain is Cysteine-rich peptide clone 2 (63 aa).

The N-terminal stretch at 1–23 is a signal peptide; it reads MHFSGVVLILLSMTLVNFVFVET. 3 cysteine pairs are disulfide-bonded: C33–C53, C38–C58, and C42–C60.

In terms of tissue distribution, expressed by the venom gland.

The protein localises to the secreted. This is Cysteine-rich peptide clone 2 from Tityus costatus (Brazilian scorpion).